Reading from the N-terminus, the 496-residue chain is Probable cytosol aminopeptidase (496 aa).

Mn(2+)-binding residues include K251 and D256. The active site involves K263. D274, D333, and E335 together coordinate Mn(2+). R337 is an active-site residue.

It belongs to the peptidase M17 family. Requires Mn(2+) as cofactor.

The protein localises to the cytoplasm. It catalyses the reaction Release of an N-terminal amino acid, Xaa-|-Yaa-, in which Xaa is preferably Leu, but may be other amino acids including Pro although not Arg or Lys, and Yaa may be Pro. Amino acid amides and methyl esters are also readily hydrolyzed, but rates on arylamides are exceedingly low.. It carries out the reaction Release of an N-terminal amino acid, preferentially leucine, but not glutamic or aspartic acids.. Presumably involved in the processing and regular turnover of intracellular proteins. Catalyzes the removal of unsubstituted N-terminal amino acids from various peptides. This Acidovorax sp. (strain JS42) protein is Probable cytosol aminopeptidase.